Reading from the N-terminus, the 688-residue chain is MQHPPLDSIRNIGIISHIDAGKTTVSERILFYTGETHKIGEVHDGEAVMDWMPQEQERGITITSTATVCRWGAWWINLIDTPGHIDFTIEVERSLRALDGAVAIFSAVEGVQPQSESVWRQADRYQVPRICFINKMDRVGADYRETLRQMEEKLGARPVLLQLPVGVEASFAGVVDLIAGEFLTFSEADQGSTVERHPIPAEIAGEAMAVREELIEAAADFDDAILADFLEGTAIAAERIRAAIRKGTIACRIVPVFLGTALRNRGIQPLLDAVAAYLPSPRDIPPVTGQRPDGEAVDSLPCDPAGPLCALAFKVQADEGRKLTYLRIYSGTVKAGGALWNSNRGCFEKAARLFRMHAHKREPIDEALAGDIVAAIGLKEVLTGDTLCDPAHKVLLSGLTVPEPVVALAVEPRGVDDRDKLLPALEKLQWEDPTFRVHEDEETGQTILTGMGELHLEVVTDRLGREFGVQVKTGRPQVVYRETITRPAERQEVFRTEFEGKVQGGEVHLRLAPLHRGEGVRIVVPPAEVLGITRELHTALTESLTRGASTGCVTGYPLTDLEVRVITVPVEQGVTTEGGVRAAAGRGLMRAARDGAPTLLEPLMDLEIITPTEYAGKVLGSVQQKRGRVEGIITQGNTEAIRALVPLAEMFGYMTELRSATKGRGGFTMEFSRFDQAPASVLQQFGLA.

The tr-type G domain occupies 7–282; that stretch reads DSIRNIGIIS…AVAAYLPSPR (276 aa). GTP is bound by residues 16 to 23, 80 to 84, and 134 to 137; these read SHIDAGKT, DTPGH, and NKMD.

Belongs to the TRAFAC class translation factor GTPase superfamily. Classic translation factor GTPase family. EF-G/EF-2 subfamily.

The protein resides in the cytoplasm. Functionally, catalyzes the GTP-dependent ribosomal translocation step during translation elongation. During this step, the ribosome changes from the pre-translocational (PRE) to the post-translocational (POST) state as the newly formed A-site-bound peptidyl-tRNA and P-site-bound deacylated tRNA move to the P and E sites, respectively. Catalyzes the coordinated movement of the two tRNA molecules, the mRNA and conformational changes in the ribosome. This is Elongation factor G 2 from Geobacter metallireducens (strain ATCC 53774 / DSM 7210 / GS-15).